Consider the following 249-residue polypeptide: NADH-quinone oxidoreductase subunit C (249 aa).

This sequence belongs to the complex I 30 kDa subunit family. In terms of assembly, NDH-1 is composed of 14 different subunits. Subunits NuoB, C, D, E, F, and G constitute the peripheral sector of the complex.

It is found in the cell inner membrane. It carries out the reaction a quinone + NADH + 5 H(+)(in) = a quinol + NAD(+) + 4 H(+)(out). In terms of biological role, NDH-1 shuttles electrons from NADH, via FMN and iron-sulfur (Fe-S) centers, to quinones in the respiratory chain. The immediate electron acceptor for the enzyme in this species is believed to be ubiquinone. Couples the redox reaction to proton translocation (for every two electrons transferred, four hydrogen ions are translocated across the cytoplasmic membrane), and thus conserves the redox energy in a proton gradient. The sequence is that of NADH-quinone oxidoreductase subunit C from Xylella fastidiosa (strain M12).